Reading from the N-terminus, the 570-residue chain is NADPH oxidase 2 (570 aa).

Over 2-9 (GNWAVNEG) the chain is Cytoplasmic. Residues 10-36 (LSIFVILVWLGLNVFLFVWYYRVYDIP) form a helical membrane-spanning segment. The Extracellular segment spans residues 37 to 46 (PKFFYTRKLL). Residues 47-72 (GSALALARAPAACLNFNCMLILLPVC) form a helical membrane-spanning segment. Residues 54–286 (RAPAACLNFN…MFLYLCERLV (233 aa)) form the Ferric oxidoreductase domain. At 73 to 95 (RNLLSFLRGSSACCSTRVRRQLD) the chain is on the cytoplasmic side. The chain crosses the membrane as a helical span at residues 96–130 (RNLTFHKMVAWMIALHSAIHTIAHLFNVEWCVNAR). Heme b contacts are provided by H101 and H115. Residues 131 to 163 (VNNSDPYSVALSELGDRQNESYLNFARKRIKNP) are Extracellular-facing. 2 N-linked (GlcNAc...) asparagine glycosylation sites follow: N132 and N149. K161 participates in a covalent cross-link: Glycyl lysine isopeptide (Lys-Gly) (interchain with G-Cter in ubiquitin). A helical membrane pass occupies residues 164–194 (EGGLYLAVTLLAGITGVVITLCLILIITSST). The Cytoplasmic portion of the chain corresponds to 195 to 203 (KTIRRSYFE). R199 and S200 together coordinate FAD. Residues 204–222 (VFWYTHHLFVIFFIGLAIH) form a helical membrane-spanning segment. Positions 206, 209, 222, 226, and 227 each coordinate heme b. Over 223 to 267 (GAERIVRGQTAESLAVHNITVCEQKISEWGKIKECPIPQFAGNPP) the chain is Extracellular. An N-linked (GlcNAc...) asparagine glycan is attached at N240. Residue K255 forms a Glycyl lysine isopeptide (Lys-Gly) (interchain with G-Cter in ubiquitin) linkage. Heme b contacts are provided by M268, Y280, and R287. Residues 268 to 285 (MTWKWIVGPMFLYLCERL) traverse the membrane as a helical segment. The Cytoplasmic segment spans residues 286–570 (VRFWRSQQKV…VHFIFNKENF (285 aa)). An FAD-binding FR-type domain is found at 287–397 (RFWRSQQKVV…DGPFGTASED (111 aa)). Residues K294, K299, K306, K328, and K334 each participate in a glycyl lysine isopeptide (Lys-Gly) (interchain with G-Cter in ubiquitin) cross-link. FAD-binding residues include W337, H338, P339, T341, H354, R356, W361, and T362. K381 is covalently cross-linked (Glycyl lysine isopeptide (Lys-Gly) (interchain with G-Cter in ubiquitin)). NADPH-binding residues include I411, R446, and T481. Residue K506 forms a Glycyl lysine isopeptide (Lys-Gly) (interchain with G-Cter in ubiquitin) linkage. R513 is an NADPH binding site. K567 participates in a covalent cross-link: Glycyl lysine isopeptide (Lys-Gly) (interchain with G-Cter in ubiquitin).

Component of the phagocyte NADPH oxidase core complex/cytochrome b558 complex, composed of CYBB (heavy chain (beta)) and CYBA (light chain (alpha)). Component of the phagocyte NADPH oxidase complex composed of an obligatory core heterodimer formed by the membrane proteins CYBA and CYBB and the cytosolic regulatory subunits NCF1/p47-phox, NCF2/p67-phox, NCF4/p40-phox and the small GTPase RAC1 or RAC2. Interacts with NCF1 (phosphorylated form). Interacts with NCF2; the interaction is enhanced in the presence of GBP7. Interacts with RAC2. Interacts with RAC1. Interacts with calprotectin (S100A8/9). Interacts with NRROS; the interaction is direct and impairs formation of a stable NADPH oxidase complex. Interacts with CYBC1; CYBC1 may act as a chaperone stabilizing Cytochrome b-245 heterodimer. The CYBA-CYBB complex interacts with GBP7. It depends on FAD as a cofactor. Post-translationally, glycosylated. In terms of processing, phosphorylated on Ser and Thr residues by PKC during neutrophils activation. Phosphorylation enhances the NADPH oxidase activity and stimulates its interaction with RAC2, NCF2/p67-phox, and NCF1/p47-phox. Undergoes 'Lys-48'-linked polyubiquitination, likely by RNF145, triggering endoplasmic reticulum-associated degradation. Detected in neutrophils (at protein level).

The protein localises to the cell membrane. The catalysed reaction is NADPH + 2 O2 = 2 superoxide + NADP(+) + H(+). Catalytic subunit of the phagocyte NADPH oxidase complex that mediates the transfer of electrons from cytosolic NADPH to O2 to produce the superoxide anion (O2(-)). In the activated complex, electrons are first transferred from NADPH to flavin adenine dinucleotide (FAD) and subsequently transferred via two heme molecules to molecular oxygen, producing superoxide through an outer-sphere reaction. Activation of the NADPH oxidase complex is initiated by the assembly of cytosolic subunits of the NADPH oxidase complex with the core NADPH oxidase complex to form a complex at the plasma membrane or phagosomal membrane. This activation process is initiated by phosphorylation dependent binding of the cytosolic NCF1/p47-phox subunit to the C-terminus of CYBA/p22-phox. NADPH oxidase complex assembly is impaired through interaction with NRROS. The chain is NADPH oxidase 2 from Homo sapiens (Human).